A 201-amino-acid chain; its full sequence is Holliday junction resolvase RecU (201 aa).

Positions 87, 89, 102, and 121 each coordinate Mg(2+).

The protein belongs to the RecU family. It depends on Mg(2+) as a cofactor.

The protein resides in the cytoplasm. It catalyses the reaction Endonucleolytic cleavage at a junction such as a reciprocal single-stranded crossover between two homologous DNA duplexes (Holliday junction).. Endonuclease that resolves Holliday junction intermediates in genetic recombination. Cleaves mobile four-strand junctions by introducing symmetrical nicks in paired strands. Promotes annealing of linear ssDNA with homologous dsDNA. Required for DNA repair, homologous recombination and chromosome segregation. This chain is Holliday junction resolvase RecU, found in Levilactobacillus brevis (strain ATCC 367 / BCRC 12310 / CIP 105137 / JCM 1170 / LMG 11437 / NCIMB 947 / NCTC 947) (Lactobacillus brevis).